The primary structure comprises 801 residues: Na(+)/H(+) antiporter subunit A1 (801 aa).

Helical transmembrane passes span 1–21 (MSLL…IPFL), 30–50 (LGWF…SLIS), 79–99 (LGLL…LYSI), 117–137 (LFMG…LYLF), 166–186 (LIIT…LSLA), 206–226 (PFFI…SAQV), 228–250 (FYIW…HSAT), 265–285 (IFAI…ITLF), 300–320 (ILAF…GIGA), 337–357 (FVAA…LFMI), 373–393 (LGGL…TTLS), 427–447 (LGIL…VYSI), 472–492 (ILML…GLFP), 522–542 (GITP…LLLI), 591–611 (LVII…SVPF), 623–643 (VFEG…IFAK), 646–666 (LFSI…FIFF), 671–691 (LALT…LCFY), 707–727 (LTNA…GLIG), and 764–784 (MDTL…YTMI).

Belongs to the CPA3 antiporters (TC 2.A.63) subunit A family. May form a heterooligomeric complex that consists of seven subunits: mnhA1, mnhB1, mnhC1, mnhD1, mnhE1, mnhF1 and mnhG1.

The protein localises to the cell membrane. Functionally, mnh complex is a Na(+)/H(+) antiporter involved in Na(+) excretion. The polypeptide is Na(+)/H(+) antiporter subunit A1 (mnhA1) (Staphylococcus epidermidis (strain ATCC 35984 / DSM 28319 / BCRC 17069 / CCUG 31568 / BM 3577 / RP62A)).